Reading from the N-terminus, the 134-residue chain is Large ribosomal subunit protein uL14 (134 aa).

Belongs to the universal ribosomal protein uL14 family. In terms of assembly, part of the 50S ribosomal subunit. Forms a cluster with proteins L3 and L19. In the 70S ribosome, L14 and L19 interact and together make contacts with the 16S rRNA in bridges B5 and B8.

Its function is as follows. Binds to 23S rRNA. Forms part of two intersubunit bridges in the 70S ribosome. The protein is Large ribosomal subunit protein uL14 of Deinococcus deserti (strain DSM 17065 / CIP 109153 / LMG 22923 / VCD115).